The primary structure comprises 489 residues: Pup--protein ligase (489 aa).

Glu25 lines the Mg(2+) pocket. Arg69 serves as a coordination point for ATP. Residue Tyr71 coordinates Mg(2+). Asp73 serves as the catalytic Proton acceptor. Glu79 is a binding site for Mg(2+). The ATP site is built by Thr82 and Trp447.

This sequence belongs to the Pup ligase/Pup deamidase family. Pup-conjugating enzyme subfamily.

The enzyme catalyses ATP + [prokaryotic ubiquitin-like protein]-L-glutamate + [protein]-L-lysine = ADP + phosphate + N(6)-([prokaryotic ubiquitin-like protein]-gamma-L-glutamyl)-[protein]-L-lysine.. Its pathway is protein degradation; proteasomal Pup-dependent pathway. The protein operates within protein modification; protein pupylation. Functionally, catalyzes the covalent attachment of the prokaryotic ubiquitin-like protein modifier Pup to the proteasomal substrate proteins, thereby targeting them for proteasomal degradation. This tagging system is termed pupylation. The ligation reaction involves the side-chain carboxylate of the C-terminal glutamate of Pup and the side-chain amino group of a substrate lysine. The sequence is that of Pup--protein ligase from Corynebacterium efficiens (strain DSM 44549 / YS-314 / AJ 12310 / JCM 11189 / NBRC 100395).